The primary structure comprises 109 residues: Ig kappa chain V region S211 (109 aa).

Residues 1–23 (DVQMTQSPSYLAASPGESVSISC) form a framework-1 region. The tract at residues 24–35 (KASNKSISNNLA) is complementarity-determining-1. Positions 36-50 (WYZZKPGKANKLLIS) are framework-2. The segment at 51–57 (SGSTLQS) is complementarity-determining-2. Positions 58–89 (GTPSRFSGSGSDTDFTLTIRSLEFQDFAVYYC) are framework-3. A complementarity-determining-3 region spans residues 90–98 (ZZYNEPYYT). The segment at 99 to 108 (FGAGTMLELK) is framework-4.

The chain is Ig kappa chain V region S211 from Rattus norvegicus (Rat).